The following is a 478-amino-acid chain: uncharacterized protein (478 aa).

A signal peptide spans 1–19; that stretch reads MKLFPLCLSALVMSTATCA. At 20–214 the chain is on the lumenal side; it reads SSVEGAIEKV…VPVTLKLQRQ (195 aa). A helical membrane pass occupies residues 215–235; the sequence is IFLSFSIVYGLISLWWAIRCI. Topologically, residues 236–240 are cytoplasmic; sequence CSRTK. Residues 241 to 261 form a helical membrane-spanning segment; that stretch reads LHLVQVCLFCWFSFFILNHPV. The Lumenal segment spans residues 262 to 289; it reads KQRIFSIDNPDEYLVPFVVSCFTYFLGD. Residues 290-310 traverse the membrane as a helical segment; the sequence is GIEYALYSLFITTTVLGFGTI. The Cytoplasmic portion of the chain corresponds to 311–317; that stretch reads RRTSKKM. A helical transmembrane segment spans residues 318 to 338; that stretch reads VLFFSLLTCGQAFLVNVAPMV. The Lumenal segment spans residues 339–356; it reads YPLLYISGSDKACVLRMV. The helical transmembrane segment at 357–377 threads the bilayer; sequence WVFNKFLYLPLITFLGAVLAF. The Cytoplasmic segment spans residues 378–391; that stretch reads RFRLKKASQFDTRW. The helical transmembrane segment at 392–412 threads the bilayer; sequence NLFALTLAIIILFAFNDLVIF. The Lumenal portion of the chain corresponds to 413 to 427; it reads DKLQKLWKYDDTTLE. The chain crosses the membrane as a helical span at residues 428–448; the sequence is YLKIVNGGIKFVAFSILLGPY. Residues 449 to 478 are Cytoplasmic-facing; that stretch reads SKLFAEPKSLQLDDFLGKHDGHKDPSLEKF.

The protein localises to the endoplasmic reticulum membrane. It localises to the golgi apparatus membrane. This is an uncharacterized protein from Schizosaccharomyces pombe (strain 972 / ATCC 24843) (Fission yeast).